Reading from the N-terminus, the 267-residue chain is S-adenosylmethionine decarboxylase proenzyme (267 aa).

S114 (schiff-base intermediate with substrate; via pyruvic acid) is an active-site residue. The residue at position 114 (S114) is a Pyruvic acid (Ser); by autocatalysis. H119 serves as the catalytic Proton acceptor; for processing activity. The Proton donor; for catalytic activity role is filled by C142.

Belongs to the prokaryotic AdoMetDC family. Type 2 subfamily. Heterooctamer of four alpha and four beta chains arranged as a tetramer of alpha/beta heterodimers. It depends on pyruvate as a cofactor. Is synthesized initially as an inactive proenzyme. Formation of the active enzyme involves a self-maturation process in which the active site pyruvoyl group is generated from an internal serine residue via an autocatalytic post-translational modification. Two non-identical subunits are generated from the proenzyme in this reaction, and the pyruvate is formed at the N-terminus of the alpha chain, which is derived from the carboxyl end of the proenzyme. The post-translation cleavage follows an unusual pathway, termed non-hydrolytic serinolysis, in which the side chain hydroxyl group of the serine supplies its oxygen atom to form the C-terminus of the beta chain, while the remainder of the serine residue undergoes an oxidative deamination to produce ammonia and the pyruvoyl group blocking the N-terminus of the alpha chain.

The enzyme catalyses S-adenosyl-L-methionine + H(+) = S-adenosyl 3-(methylsulfanyl)propylamine + CO2. It functions in the pathway amine and polyamine biosynthesis; S-adenosylmethioninamine biosynthesis; S-adenosylmethioninamine from S-adenosyl-L-methionine: step 1/1. Catalyzes the decarboxylation of S-adenosylmethionine to S-adenosylmethioninamine (dcAdoMet), the propylamine donor required for the synthesis of the polyamines spermine and spermidine from the diamine putrescine. The sequence is that of S-adenosylmethionine decarboxylase proenzyme from Erwinia tasmaniensis (strain DSM 17950 / CFBP 7177 / CIP 109463 / NCPPB 4357 / Et1/99).